The following is a 32-amino-acid chain: Delta-conotoxin-like CnVID (32 aa).

3 disulfides stabilise this stretch: Cys-3-Cys-18, Cys-10-Cys-22, and Cys-17-Cys-27. Pro-6 and Pro-14 each carry 4-hydroxyproline.

Belongs to the conotoxin O1 superfamily. As to expression, expressed by the venom duct.

Its subcellular location is the secreted. Functionally, delta-conotoxins bind to site 6 of voltage-gated sodium channels (Nav) and inhibit the inactivation process. This toxin acts on Nav1.2/SCN2A, Nav1.3/SCN3A and Nav1.6/SCN8A (EC(50)=1.7 uM). The protein is Delta-conotoxin-like CnVID of Conus consors (Singed cone).